The sequence spans 444 residues: Methylenetetrahydrofolate--tRNA-(uracil-5-)-methyltransferase TrmFO (444 aa).

9–14 provides a ligand contact to FAD; the sequence is GAGLAG.

Belongs to the MnmG family. TrmFO subfamily. FAD is required as a cofactor.

It localises to the cytoplasm. The enzyme catalyses uridine(54) in tRNA + (6R)-5,10-methylene-5,6,7,8-tetrahydrofolate + NADH + H(+) = 5-methyluridine(54) in tRNA + (6S)-5,6,7,8-tetrahydrofolate + NAD(+). The catalysed reaction is uridine(54) in tRNA + (6R)-5,10-methylene-5,6,7,8-tetrahydrofolate + NADPH + H(+) = 5-methyluridine(54) in tRNA + (6S)-5,6,7,8-tetrahydrofolate + NADP(+). Its function is as follows. Catalyzes the folate-dependent formation of 5-methyl-uridine at position 54 (M-5-U54) in all tRNAs. The protein is Methylenetetrahydrofolate--tRNA-(uracil-5-)-methyltransferase TrmFO of Koribacter versatilis (strain Ellin345).